Reading from the N-terminus, the 82-residue chain is Small ribosomal subunit protein bS16 (82 aa).

Belongs to the bacterial ribosomal protein bS16 family.

The chain is Small ribosomal subunit protein bS16 from Haemophilus influenzae (strain 86-028NP).